A 266-amino-acid polypeptide reads, in one-letter code: Putative carbamate hydrolase RutD (266 aa).

The AB hydrolase-1 domain occupies 14–119 (PVVVLSAGLG…LVNGWLSLSP (106 aa)).

This sequence belongs to the AB hydrolase superfamily. Hydrolase RutD family.

It catalyses the reaction carbamate + 2 H(+) = NH4(+) + CO2. Its function is as follows. Involved in pyrimidine catabolism. May facilitate the hydrolysis of carbamate, a reaction that can also occur spontaneously. The chain is Putative carbamate hydrolase RutD from Klebsiella pneumoniae subsp. pneumoniae (strain ATCC 700721 / MGH 78578).